Consider the following 822-residue polypeptide: Anaphase-promoting complex subunit 2 (822 aa).

Phosphoserine is present on residues serine 218, serine 314, serine 470, serine 534, and serine 697. Positions 450–495 (GDLAVELSKTDPASLETGQDSEDDSGEPEDWVPDPVDADPGKSSSK) are disordered. The span at 468–481 (QDSEDDSGEPEDWV) shows a compositional bias: acidic residues. Residues 502–700 (ISLLVSIYGS…LLRRRMSVWL (199 aa)) are cullin homology. Tyrosine 810 carries the phosphotyrosine modification.

Belongs to the cullin family. In terms of assembly, the mammalian APC/C is composed at least of 14 distinct subunits ANAPC1, ANAPC2, CDC27/APC3, ANAPC4, ANAPC5, CDC16/APC6, ANAPC7, CDC23/APC8, ANAPC10, ANAPC11, CDC26/APC12, ANAPC13, ANAPC15 and ANAPC16 that assemble into a complex of at least 19 chains with a combined molecular mass of around 1.2 MDa; APC/C interacts with FZR1 and FBXO5. In the context of the APC/C complex, directly interacts with UBE2C and UBE2S. Interacts (via cullin domain) with ANAPC11 and with UBCH10. Interacts with NEUROD2. Interacts with FBXO43; the interaction is direct.

It participates in protein modification; protein ubiquitination. Functionally, together with the RING-H2 protein ANAPC11, constitutes the catalytic component of the anaphase promoting complex/cyclosome (APC/C), a cell cycle-regulated E3 ubiquitin ligase that controls progression through mitosis and the G1 phase of the cell cycle. The APC/C complex acts by mediating ubiquitination and subsequent degradation of target proteins: it mainly mediates the formation of 'Lys-11'-linked polyubiquitin chains and, to a lower extent, the formation of 'Lys-48'- and 'Lys-63'-linked polyubiquitin chains. The APC/C complex catalyzes assembly of branched 'Lys-11'-/'Lys-48'-linked branched ubiquitin chains on target proteins. The CDC20-APC/C complex positively regulates the formation of synaptic vesicle clustering at active zone to the presynaptic membrane in postmitotic neurons. CDC20-APC/C-induced degradation of NEUROD2 drives presynaptic differentiation. This is Anaphase-promoting complex subunit 2 (ANAPC2) from Homo sapiens (Human).